Here is a 140-residue protein sequence, read N- to C-terminus: Small ribosomal subunit protein uS12 (140 aa).

The segment at 33–55 (KEQTNVSSPQKRGVCTRVGTMTP) is disordered.

This sequence belongs to the universal ribosomal protein uS12 family. In terms of assembly, part of the 30S ribosomal subunit. Contacts proteins S8 and S17. May interact with IF1 in the 30S initiation complex.

Functionally, with S4 and S5 plays an important role in translational accuracy. In terms of biological role, interacts with and stabilizes bases of the 16S rRNA that are involved in tRNA selection in the A site and with the mRNA backbone. Located at the interface of the 30S and 50S subunits, it traverses the body of the 30S subunit contacting proteins on the other side and probably holding the rRNA structure together. The combined cluster of proteins S8, S12 and S17 appears to hold together the shoulder and platform of the 30S subunit. The sequence is that of Small ribosomal subunit protein uS12 from Geobacillus kaustophilus (strain HTA426).